The following is a 420-amino-acid chain: Transcription factor TCP4 (420 aa).

A disordered region spans residues methionine 1–glycine 27. Positions arginine 45–leucine 103 constitute a TCP domain. Disordered stretches follow at residues asparagine 121–aspartate 176, leucine 228–proline 256, histidine 353–isoleucine 379, and glutamine 399–histidine 420. The span at lysine 410–histidine 420 shows a compositional bias: polar residues.

Interacts with AHL27 and AHL29. Interacts with SPL. Interacts with JGB. Interacts with GI (via N-terminus). As to expression, expressed in cotyledons, particularly in the vascular region, in leaves, roots, buds, flowers and immature siliques.

Its subcellular location is the nucleus. Transcription factor playing a pivotal role in the control of morphogenesis of shoot organs by negatively regulating the expression of boundary-specific genes such as CUC genes, probably through the induction of miRNA (e.g. miR164). Required during early steps of embryogenesis. Participates in ovule development. Activates LOX2 expression by binding to the 5'-GGACCA-3' motif found in its promoter. Activates YUC5 transcription by binding to the 5'-GTGGGCCA-3' motif found in its promoter. Through the activation of YUC5 transcription, integrates the auxin response to a brassinosteroid-dependent molecular circuit that promotes cell elongation in hypocotyls. Activates GIS transcription by binding to the 5'-TGGTCC-3' motif found in its promoter. Involved in the regulation of trichome branching through the activation of GIS transcription. Activates CO transcription by binding to the 5'-GGACCAC-3' motif found in its promoter. Involved in the regulation of photoperiodic flowering through the activation of CO transcription. Activates TCL1 and TCL2 transcription by binding to the 5'-TGGCCA-3' and 5'-GTGGACCA-3' motifS found in their respective promoters. Involved in the suppression of trichome initiaition through the activation of TCL1 and TCL2 transcription. Activates HAT2 transcription by binding to the 5'-TGGTCCAC-3' motif found in its promoter. Through the activation of HAT2 transcription, involved in the auxin-independent reprogramming of mitotic cells to exit division and acquire differentiation competence within the transition zone. This is Transcription factor TCP4 (TCP4) from Arabidopsis thaliana (Mouse-ear cress).